The chain runs to 241 residues: MTDQSRTRFPQFYITAPQPCPYLLGRYEKKVFTHLLGDEPVSLNNALTQAGFRRSQNIAYRPACDDCQACVSVRVVVKDFQPGRTFRRILARNADLRSTPQPARATDEQYTLLRRYLDARHAEGGMADMSRLDYVAMVEDTTIATRLFEYRRPDGTLTAAALTDMLDDGLSMVYSFYEPGEPGRSLGTWMVLEHIERARALSLPYVYLGYWVDGSRKMAYKTRFRPLEALTMEGWRAHPAS.

Belongs to the R-transferase family. Bpt subfamily.

The protein localises to the cytoplasm. The catalysed reaction is N-terminal L-glutamyl-[protein] + L-leucyl-tRNA(Leu) = N-terminal L-leucyl-L-glutamyl-[protein] + tRNA(Leu) + H(+). It carries out the reaction N-terminal L-aspartyl-[protein] + L-leucyl-tRNA(Leu) = N-terminal L-leucyl-L-aspartyl-[protein] + tRNA(Leu) + H(+). Functions in the N-end rule pathway of protein degradation where it conjugates Leu from its aminoacyl-tRNA to the N-termini of proteins containing an N-terminal aspartate or glutamate. The polypeptide is Aspartate/glutamate leucyltransferase (Parvibaculum lavamentivorans (strain DS-1 / DSM 13023 / NCIMB 13966)).